A 560-amino-acid polypeptide reads, in one-letter code: 2-succinyl-5-enolpyruvyl-6-hydroxy-3-cyclohexene-1-carboxylate synthase (560 aa).

It belongs to the TPP enzyme family. MenD subfamily. As to quaternary structure, homodimer. Requires Mg(2+) as cofactor. Mn(2+) is required as a cofactor. The cofactor is thiamine diphosphate.

The enzyme catalyses isochorismate + 2-oxoglutarate + H(+) = 5-enolpyruvoyl-6-hydroxy-2-succinyl-cyclohex-3-ene-1-carboxylate + CO2. Its pathway is quinol/quinone metabolism; 1,4-dihydroxy-2-naphthoate biosynthesis; 1,4-dihydroxy-2-naphthoate from chorismate: step 2/7. It participates in quinol/quinone metabolism; menaquinone biosynthesis. In terms of biological role, catalyzes the thiamine diphosphate-dependent decarboxylation of 2-oxoglutarate and the subsequent addition of the resulting succinic semialdehyde-thiamine pyrophosphate anion to isochorismate to yield 2-succinyl-5-enolpyruvyl-6-hydroxy-3-cyclohexene-1-carboxylate (SEPHCHC). In Staphylococcus saprophyticus subsp. saprophyticus (strain ATCC 15305 / DSM 20229 / NCIMB 8711 / NCTC 7292 / S-41), this protein is 2-succinyl-5-enolpyruvyl-6-hydroxy-3-cyclohexene-1-carboxylate synthase.